A 75-amino-acid chain; its full sequence is UPF0291 protein Teth39_0326 (75 aa).

It belongs to the UPF0291 family.

The protein localises to the cytoplasm. This is UPF0291 protein Teth39_0326 from Thermoanaerobacter pseudethanolicus (strain ATCC 33223 / 39E) (Clostridium thermohydrosulfuricum).